The following is a 616-amino-acid chain: Chaperone protein HscA (616 aa).

The protein belongs to the heat shock protein 70 family.

Chaperone involved in the maturation of iron-sulfur cluster-containing proteins. Has a low intrinsic ATPase activity which is markedly stimulated by HscB. Involved in the maturation of IscU. This chain is Chaperone protein HscA, found in Serratia proteamaculans (strain 568).